A 389-amino-acid chain; its full sequence is tRNA-specific 2-thiouridylase MnmA (389 aa).

ATP is bound by residues 21 to 28 and Leu-47; that span reads AMSGGVDS. Catalysis depends on Cys-115, which acts as the Nucleophile. Cys-115 and Cys-212 are disulfide-bonded. ATP is bound at residue Gly-139. The interaction with tRNA stretch occupies residues 162 to 164; that stretch reads RDQ. Catalysis depends on Cys-212, which acts as the Cysteine persulfide intermediate.

It belongs to the MnmA/TRMU family.

It is found in the cytoplasm. It carries out the reaction S-sulfanyl-L-cysteinyl-[protein] + uridine(34) in tRNA + AH2 + ATP = 2-thiouridine(34) in tRNA + L-cysteinyl-[protein] + A + AMP + diphosphate + H(+). Catalyzes the 2-thiolation of uridine at the wobble position (U34) of tRNA, leading to the formation of s(2)U34. The chain is tRNA-specific 2-thiouridylase MnmA from Xanthobacter autotrophicus (strain ATCC BAA-1158 / Py2).